Here is a 272-residue protein sequence, read N- to C-terminus: Elongation factor Ts (272 aa).

The tract at residues 76–79 (TDFV) is involved in Mg(2+) ion dislocation from EF-Tu.

The protein belongs to the EF-Ts family.

It localises to the cytoplasm. Its function is as follows. Associates with the EF-Tu.GDP complex and induces the exchange of GDP to GTP. It remains bound to the aminoacyl-tRNA.EF-Tu.GTP complex up to the GTP hydrolysis stage on the ribosome. This chain is Elongation factor Ts, found in Corynebacterium jeikeium (strain K411).